A 443-amino-acid chain; its full sequence is Na(+)-translocating NADH-quinone reductase subunit A (443 aa).

It belongs to the NqrA family. In terms of assembly, composed of six subunits; NqrA, NqrB, NqrC, NqrD, NqrE and NqrF.

It catalyses the reaction a ubiquinone + n Na(+)(in) + NADH + H(+) = a ubiquinol + n Na(+)(out) + NAD(+). In terms of biological role, NQR complex catalyzes the reduction of ubiquinone-1 to ubiquinol by two successive reactions, coupled with the transport of Na(+) ions from the cytoplasm to the periplasm. NqrA to NqrE are probably involved in the second step, the conversion of ubisemiquinone to ubiquinol. This chain is Na(+)-translocating NADH-quinone reductase subunit A, found in Mannheimia succiniciproducens (strain KCTC 0769BP / MBEL55E).